The following is a 394-amino-acid chain: 3-phenylpropionate/cinnamic acid dioxygenase ferredoxin--NAD(+) reductase component (394 aa).

FAD is bound at residue 5–36 (TFIIVGAGQAGAMAAATLRQQQFDGDIILIGK). Residue 146–174 (RILIVGGGVIGLELAATSCELGANVTVIE) coordinates NAD(+).

Belongs to the bacterial ring-hydroxylating dioxygenase ferredoxin reductase family. As to quaternary structure, this dioxygenase system consists of four proteins: the two subunits of the hydroxylase component (HcaE and HcaF), a ferredoxin (HcaC) and a ferredoxin reductase (HcaD). It depends on FAD as a cofactor.

It carries out the reaction 2 reduced [2Fe-2S]-[ferredoxin] + NAD(+) + H(+) = 2 oxidized [2Fe-2S]-[ferredoxin] + NADH. Its pathway is aromatic compound metabolism; 3-phenylpropanoate degradation. In terms of biological role, part of the multicomponent 3-phenylpropionate dioxygenase, that converts 3-phenylpropionic acid (PP) and cinnamic acid (CI) into 3-phenylpropionate-dihydrodiol (PP-dihydrodiol) and cinnamic acid-dihydrodiol (CI-dihydrodiol), respectively. The chain is 3-phenylpropionate/cinnamic acid dioxygenase ferredoxin--NAD(+) reductase component from Photorhabdus laumondii subsp. laumondii (strain DSM 15139 / CIP 105565 / TT01) (Photorhabdus luminescens subsp. laumondii).